A 415-amino-acid chain; its full sequence is MKAVEVLQRNSRGAFTVPAHGLYPYQWLWDSAFIALGWTQVDWERAWQELLCLFDYGQGPDGMLPHIVFHEQSRDYFPGPDVWGREARAQPATSGITQPPVVATVVRYLYEKDPDRDRARSRARYLFPKLLAYHRWLYHARDPYRTGLVVIVHPWESGMDNSPAWDKPLSRVPVENLPPYERRDVKHVNPEERPRKEDYDRYLSLLYLFRRLEYDPRGIYRQSPFKVVDVGFNAILQRANRDLYALAVLLQEDPYEIEEWIVRGEVGLEALWDREAGFYFSWDLVAGEPIAVKTSAGFLPLFAGTPHQGRASLLAQEAERWGEKARYLLPSVDPTSPFFEPGRYWRGPVWINVNWMVAEGFRDYGFAALAARLKADALALMEREGFREYYDPLTGQGRGGEGFSWSAALALFWTR.

Residues Tyr23, 27-30 (WLWD), Tyr76, Gln98, and Gly158 contribute to the substrate site. The Proton donor role is filled by Asp160. Substrate contacts are provided by residues Arg193 and 344-345 (YW). Catalysis depends on Glu388, which acts as the Proton acceptor.

It belongs to the glycosyl hydrolase 63 family. In terms of assembly, homotetramer in solution.

The catalysed reaction is (2R)-2-O-(alpha-D-mannosyl)-glycerate + H2O = D-mannose + (R)-glycerate. It carries out the reaction (2R)-2-O-(alpha-D-glucopyranosyl)-glycerate + H2O = (R)-glycerate + D-glucose. Its activity is regulated as follows. Activity is not stimulated by divalent cations and not affected in the presence of EDTA. In terms of biological role, hydrolase that catalyzes the hydrolysis of mannosylglycerate (MG), a solute produced in response to osmotic stress in thermophiles, into mannose and glycerate. Can also hydrolyze glucosylglycerate (GG) to glucose and glycerate, with similar catalytic efficiency. Is highly specific for MG and GG, and cannot use mannosylglyceramide (MGA), glucosylglycerol, mannosylglucosylglycerate (MGG), glucosylglucosylglycerate (GGG) or trehalose as substrates. The protein is Mannosylglycerate hydrolase of Thermus thermophilus (strain ATCC BAA-163 / DSM 7039 / HB27).